The following is a 395-amino-acid chain: Protein-arginine rhamnosyltransferase (395 aa).

Residues 19–22, Tyr205, Gln272, and 288–292 each bind dTDP-beta-L-rhamnose; these read NYGD and RGEDS. Asp22 serves as the catalytic Proton acceptor. Glu290 is an active-site residue.

Belongs to the glycosyltransferase 104 family.

It carries out the reaction dTDP-beta-L-rhamnose + L-arginyl-[protein] = N(omega)-(alpha-L-rhamnosyl)-L-arginyl-[protein] + dTDP + H(+). Protein-arginine rhamnosyltransferase that catalyzes the transfer of a single rhamnose to elongation factor P (EF-P) on 'Lys-32', a modification required for EF-P-dependent rescue of polyproline stalled ribosomes. The polypeptide is Protein-arginine rhamnosyltransferase (Shewanella oneidensis (strain ATCC 700550 / JCM 31522 / CIP 106686 / LMG 19005 / NCIMB 14063 / MR-1)).